A 775-amino-acid polypeptide reads, in one-letter code: MVKHMFLEDVNNLISDDKWLIFQNEYNTEVNPRYETLFTLTNGYMGVRGTFEEGSEGERSGNFIAGIFDKSDAQVREIVNAQNWLRIKLYVEGEELSLDKCQLIEFKRILDMKKGILFRSMLIKDSKDRITRIEGYRFISRSDLHRSAIKLFVTPVNYSGVVGIESIIDGTVLNSADSPKHRVKHLKVADNSSLNKSGVYLETATIDDDIRIATGSAVRLYHYEDKEKNNIAKFKRFLPLGEMSIEYFEFDGTENKTVVIDKFIITYTSRDVKKGLLKSTVEKELFAFAGEGIDKELQRHIEVYEELWSVADINIEGDEEADKALRFNIFHLMSSVNENDPMVSIAAKALHGEGYKGHVFWDTEIFMLPFFIYVHPKAAKTLLMYRYNMLDAARKNAALNGYKGAQYPWESADTGEEETPKWGFDYMGNPVRIWTGDLEHHITADIAFAVWEYFRATEDIEFMLNYGAEVIFETARFWVSRCEYVKELDRYEINNVIGPDEFHEHVDNNAYTDYLAKWNIKKGLELINMLKEKYPEHYHAISNKKCLTNEEMEKWKEVEEKIYIPYDKDKKLIEQFEGYFDKKDYVIDKFDENNMPIWPEGVDITKLGDTQLIKQADVVMLMLLLGEEFDEETKRINYEYYEKRTMHKSSLGPSMYAIMGLKVGDHKNAYQSFMRSANVDLVDNQGNTKEGLHAASAGGTWQVVVFGFGGMEIDKEGALNINSWLPEKWDKLSYKVFWKGNLIEVIVTKQEVTVKKLKGKGNIKVKVKGKELTIE.

Substrate is bound at residue 361-362 (WD). The active-site Proton donor is the Glu-501. Residue 614–615 (KQ) participates in substrate binding.

It belongs to the glycosyl hydrolase 65 family. As to quaternary structure, homohexamer.

The enzyme catalyses kojibiose + phosphate = beta-D-glucose 1-phosphate + D-glucose. Its activity is regulated as follows. Inhibited by Hg(2+) and Pb(2+). Catalyzes the reversible phosphorolysis of kojibiose into beta-D-glucose 1-phosphate (Glc1P) and D-glucose. Can act with alpha-1,2-oligoglucans, such as selaginose, but more slowly. Inactive when disaccharides with linkages other than alpha-1,2 linkages, such as sophorose, trehalose, neotrehalose, nigerose, laminaribiose, maltose, cellobiose, isomaltose, gentiobiose, sucrose and lactose, are used as substrates. In contrast, shows broad specificity for the reverse reaction. Various monosaccharides and disaccharides having a glucosyl residue at the non-reducing end are effective acceptors. This Thermoanaerobacter brockii (Thermoanaerobium brockii) protein is Kojibiose phosphorylase.